Reading from the N-terminus, the 205-residue chain is Iron-sulfur assembly protein 2 (205 aa).

Cys131, Cys196, and Cys198 together coordinate Fe cation.

It belongs to the HesB/IscA family.

It is found in the mitochondrion matrix. Functionally, involved in the assembly of mitochondrial and cytoplasmic iron-sulfur proteins. Probably involved in the binding of an intermediate of Fe/S cluster assembly. This chain is Iron-sulfur assembly protein 2 (isa2), found in Schizosaccharomyces pombe (strain 972 / ATCC 24843) (Fission yeast).